We begin with the raw amino-acid sequence, 284 residues long: Bifunctional protein FolD (284 aa).

NADP(+)-binding positions include 165-167 (GRS) and Ser-190.

It belongs to the tetrahydrofolate dehydrogenase/cyclohydrolase family. In terms of assembly, homodimer.

The enzyme catalyses (6R)-5,10-methylene-5,6,7,8-tetrahydrofolate + NADP(+) = (6R)-5,10-methenyltetrahydrofolate + NADPH. The catalysed reaction is (6R)-5,10-methenyltetrahydrofolate + H2O = (6R)-10-formyltetrahydrofolate + H(+). It functions in the pathway one-carbon metabolism; tetrahydrofolate interconversion. Its function is as follows. Catalyzes the oxidation of 5,10-methylenetetrahydrofolate to 5,10-methenyltetrahydrofolate and then the hydrolysis of 5,10-methenyltetrahydrofolate to 10-formyltetrahydrofolate. The chain is Bifunctional protein FolD from Streptococcus equi subsp. zooepidemicus (strain MGCS10565).